A 209-amino-acid chain; its full sequence is Peptide methionine sulfoxide reductase MsrA (209 aa).

Residue C14 is part of the active site. Residues 183–209 (FSALTTGGNQPGARGGLTNNTCQHPRH) are disordered. Residues 199 to 209 (LTNNTCQHPRH) show a composition bias toward polar residues.

It belongs to the MsrA Met sulfoxide reductase family.

The enzyme catalyses L-methionyl-[protein] + [thioredoxin]-disulfide + H2O = L-methionyl-(S)-S-oxide-[protein] + [thioredoxin]-dithiol. The catalysed reaction is [thioredoxin]-disulfide + L-methionine + H2O = L-methionine (S)-S-oxide + [thioredoxin]-dithiol. Its function is as follows. Has an important function as a repair enzyme for proteins that have been inactivated by oxidation. Catalyzes the reversible oxidation-reduction of methionine sulfoxide in proteins to methionine. This chain is Peptide methionine sulfoxide reductase MsrA, found in Pseudomonas fluorescens.